Consider the following 131-residue polypeptide: ER membrane protein complex subunit 5 (131 aa).

The Cytoplasmic portion of the chain corresponds to 1 to 3 (MAP). The helical transmembrane segment at 4–22 (SLWKGLVGIGLFALAHAAL) threads the bilayer. The Lumenal segment spans residues 23–43 (SAAQHRSYMRLTEKEDESLPI). Residues 44–63 (DIVLQTLLAFAVTCYGIVHI) form a helical membrane-spanning segment. Residues 64-131 (AGEFKDMDAT…KLRKLESLRR (68 aa)) are Cytoplasmic-facing. Ser-120 carries the phosphoserine modification.

It belongs to the membrane magnesium transporter (TC 1.A.67) family. Component of the ER membrane protein complex (EMC).

It localises to the endoplasmic reticulum membrane. The protein resides in the golgi apparatus membrane. The protein localises to the early endosome membrane. Part of the endoplasmic reticulum membrane protein complex (EMC) that enables the energy-independent insertion into endoplasmic reticulum membranes of newly synthesized membrane proteins. Preferentially accommodates proteins with transmembrane domains that are weakly hydrophobic or contain destabilizing features such as charged and aromatic residues. Involved in the cotranslational insertion of multi-pass membrane proteins in which stop-transfer membrane-anchor sequences become ER membrane spanning helices. It is also required for the post-translational insertion of tail-anchored/TA proteins in endoplasmic reticulum membranes. By mediating the proper cotranslational insertion of N-terminal transmembrane domains in an N-exo topology, with translocated N-terminus in the lumen of the ER, controls the topology of multi-pass membrane proteins like the G protein-coupled receptors. By regulating the insertion of various proteins in membranes, it is indirectly involved in many cellular processes. May be involved in Mg(2+) transport. This is ER membrane protein complex subunit 5 from Pongo abelii (Sumatran orangutan).